Here is a 747-residue protein sequence, read N- to C-terminus: WD repeat-containing protein 91 (747 aa).

Residues 183-227 adopt a coiled-coil conformation; the sequence is QRTNQVQEENEVLRQKLFALQAEVHRLKKEEQQQEEAAALVQHKL. S256 bears the Phosphoserine mark. The segment covering 265 to 278 has biased composition (low complexity); the sequence is LLPQSKKSPSRLSP. The segment at 265–358 is disordered; that stretch reads LLPQSKKSPS…SQTQCAEKKL (94 aa). The segment covering 283–299 has biased composition (polar residues); the sequence is PQAQSSAKKDTFSSQAT. S288 bears the Phosphoserine mark. The span at 332-343 shows a compositional bias: basic and acidic residues; the sequence is RLQDHGKERREL. A compositionally biased stretch (polar residues) spans 344 to 353; that stretch reads LSTSSSQTQC. WD repeat units follow at residues 406 to 445, 448 to 488, 511 to 555, 560 to 599, 602 to 641, 664 to 702, and 709 to 747; these read EHHS…QTKA, ISKS…NLCE, VCSA…QQLQ, PEPI…CAMS, AHCG…LKVS, VQVP…KVLE, and GHRA…AHKL.

The protein belongs to the WD repeat WDR91 family. Interacts with WDR81; involved in early to late endosome cargo transport. Interacts with BECN1; negatively regulates the PI3 kinase/PI3K activity associated with endosomal membranes.

It is found in the early endosome membrane. Its subcellular location is the late endosome membrane. In terms of biological role, functions as a negative regulator of the PI3 kinase/PI3K activity associated with endosomal membranes via BECN1, a core subunit of the PI3K complex. By modifying the phosphatidylinositol 3-phosphate/PtdInsP3 content of endosomal membranes may regulate endosome fusion, recycling, sorting and early to late endosome transport. It is for instance, required for the delivery of cargos like BST2/tetherin from early to late endosome and thereby participates indirectly to their degradation by the lysosome. May play a role in meiosis. The sequence is that of WD repeat-containing protein 91 from Rattus norvegicus (Rat).